Consider the following 324-residue polypeptide: Myb-like DNA-binding protein myb-1 (324 aa).

HTH myb-type domains lie at 4–59 (MPDQ…KPGL) and 60–110 (NHGP…NRKK). The tract at residues 107–231 (NRKKNQLRRQ…PTGSTLRLLT (125 aa)) is disordered. The span at 155–165 (RRPSSPSSFND) shows a compositional bias: polar residues. Over residues 166-175 (SLHHRVHESI) the composition is skewed to basic and acidic residues. Low complexity-rich tracts occupy residues 183–192 (QQQQQQQQQQ) and 222–231 (PTGSTLRLLT).

It is found in the nucleus. This Neurospora crassa (strain ATCC 24698 / 74-OR23-1A / CBS 708.71 / DSM 1257 / FGSC 987) protein is Myb-like DNA-binding protein myb-1 (rca-1).